Consider the following 72-residue polypeptide: UPF0352 protein NTHI1007 (72 aa).

It belongs to the UPF0352 family.

The protein is UPF0352 protein NTHI1007 of Haemophilus influenzae (strain 86-028NP).